Reading from the N-terminus, the 237-residue chain is 1-(5-phosphoribosyl)-5-[(5-phosphoribosylamino)methylideneamino] imidazole-4-carboxamide isomerase (237 aa).

Catalysis depends on D8, which acts as the Proton acceptor. The active-site Proton donor is D127.

Belongs to the HisA/HisF family.

The protein resides in the cytoplasm. The enzyme catalyses 1-(5-phospho-beta-D-ribosyl)-5-[(5-phospho-beta-D-ribosylamino)methylideneamino]imidazole-4-carboxamide = 5-[(5-phospho-1-deoxy-D-ribulos-1-ylimino)methylamino]-1-(5-phospho-beta-D-ribosyl)imidazole-4-carboxamide. It participates in amino-acid biosynthesis; L-histidine biosynthesis; L-histidine from 5-phospho-alpha-D-ribose 1-diphosphate: step 4/9. This is 1-(5-phosphoribosyl)-5-[(5-phosphoribosylamino)methylideneamino] imidazole-4-carboxamide isomerase from Sulfurovum sp. (strain NBC37-1).